Here is a 177-residue protein sequence, read N- to C-terminus: uncharacterized protein (177 aa).

Composition is skewed to low complexity over residues 78 to 93 and 120 to 130; these read NNNN…NTNN and SDVNSNNNNGN. The tract at residues 78–146 is disordered; it reads NNNNNNNNTI…NKKLKKDGTN (69 aa). A compositionally biased stretch (basic residues) spans 131-146; the sequence is HQKKKINKKLKKDGTN.

This is an uncharacterized protein from Dictyostelium discoideum (Social amoeba).